The primary structure comprises 179 residues: Translationally-controlled tumor protein homolog (179 aa).

The 179-residue stretch at 1–179 (MIIYKDIISG…WKHGLEEMKV (179 aa)) folds into the TCTP domain.

The protein belongs to the TCTP family.

It localises to the cytoplasm. It is found in the cytoskeleton. In terms of biological role, involved in protein synthesis. Involved in microtubule stabilization. This chain is Translationally-controlled tumor protein homolog, found in Aspergillus fumigatus (strain ATCC MYA-4609 / CBS 101355 / FGSC A1100 / Af293) (Neosartorya fumigata).